Reading from the N-terminus, the 230-residue chain is Flagellar L-ring protein (230 aa).

A signal peptide spans Met-1–Gly-21. Cys-22 is lipidated: N-palmitoyl cysteine. A lipid anchor (S-diacylglycerol cysteine) is attached at Cys-22. Positions Pro-34–Ile-53 are disordered. The span at Thr-36 to Ser-46 shows a compositional bias: pro residues.

This sequence belongs to the FlgH family. The basal body constitutes a major portion of the flagellar organelle and consists of four rings (L,P,S, and M) mounted on a central rod.

The protein localises to the cell outer membrane. It is found in the bacterial flagellum basal body. Its function is as follows. Assembles around the rod to form the L-ring and probably protects the motor/basal body from shearing forces during rotation. The chain is Flagellar L-ring protein from Bordetella bronchiseptica (strain ATCC BAA-588 / NCTC 13252 / RB50) (Alcaligenes bronchisepticus).